Consider the following 442-residue polypeptide: Tryptophan synthase beta chain 2 (442 aa).

K110 bears the N6-(pyridoxal phosphate)lysine mark.

Belongs to the TrpB family. Tetramer of two alpha and two beta chains. It depends on pyridoxal 5'-phosphate as a cofactor.

It catalyses the reaction (1S,2R)-1-C-(indol-3-yl)glycerol 3-phosphate + L-serine = D-glyceraldehyde 3-phosphate + L-tryptophan + H2O. It participates in amino-acid biosynthesis; L-tryptophan biosynthesis; L-tryptophan from chorismate: step 5/5. Functionally, the beta subunit is responsible for the synthesis of L-tryptophan from indole and L-serine. This chain is Tryptophan synthase beta chain 2, found in Thermococcus kodakarensis (strain ATCC BAA-918 / JCM 12380 / KOD1) (Pyrococcus kodakaraensis (strain KOD1)).